A 337-amino-acid polypeptide reads, in one-letter code: Anthranilate phosphoribosyltransferase (337 aa).

5-phospho-alpha-D-ribose 1-diphosphate is bound by residues Gly-82, Gly-85–Asp-86, Thr-90, Asn-92–Thr-95, Lys-110–Ser-118, and Ser-122. Gly-82 is an anthranilate binding site. Ser-94 provides a ligand contact to Mg(2+). Arg-168 contacts anthranilate. Asp-226 and Glu-227 together coordinate Mg(2+).

It belongs to the anthranilate phosphoribosyltransferase family. Homodimer. The cofactor is Mg(2+).

The enzyme catalyses N-(5-phospho-beta-D-ribosyl)anthranilate + diphosphate = 5-phospho-alpha-D-ribose 1-diphosphate + anthranilate. Its pathway is amino-acid biosynthesis; L-tryptophan biosynthesis; L-tryptophan from chorismate: step 2/5. Catalyzes the transfer of the phosphoribosyl group of 5-phosphorylribose-1-pyrophosphate (PRPP) to anthranilate to yield N-(5'-phosphoribosyl)-anthranilate (PRA). The chain is Anthranilate phosphoribosyltransferase from Francisella tularensis subsp. mediasiatica (strain FSC147).